Consider the following 45-residue polypeptide: U1-ctenitoxin-Pk1a (45 aa).

Disulfide bonds link cysteine 3-cysteine 16, cysteine 10-cysteine 25, cysteine 15-cysteine 34, and cysteine 27-cysteine 32.

Expressed by the venom gland.

Its subcellular location is the secreted. In terms of biological role, neurotoxin. Causes rapid general flaccid paralysis and death in mice at dose levels of 5 ug per mouse. The sequence is that of U1-ctenitoxin-Pk1a from Phoneutria keyserlingi (Brazilian wandering spider).